A 99-amino-acid polypeptide reads, in one-letter code: MSTAQSLKSVDYEVFGRVQGVCFRMYTEDEARKIGVVGWVKNTSKGTVTGQVQGPEDKVNSMKSWLSKVGSPSSRIDRTNFSNEKTISKLEYSNFSIRY.

Residue Ser2 is modified to N-acetylserine. Residues 9 to 99 (SVDYEVFGRV…LEYSNFSIRY (91 aa)) form the Acylphosphatase-like domain. Active-site residues include Arg24 and Asn42. The residue at position 93 (Ser93) is a Phosphoserine.

The protein belongs to the acylphosphatase family.

It catalyses the reaction an acyl phosphate + H2O = a carboxylate + phosphate + H(+). Its physiological role is not yet clear. The sequence is that of Acylphosphatase-2 (ACYP2) from Homo sapiens (Human).